The sequence spans 756 residues: Zinc finger and BTB domain-containing protein 49 (756 aa).

A BTB domain is found at 25 to 91 (CDCMLVVRGV…MYTSRLDLNQ (67 aa)). Disordered stretches follow at residues 176 to 197 (APSA…GGSC), 226 to 290 (PSQV…LSEP), and 311 to 379 (SQQS…PSQA). Residues 226–242 (PSQVPATQQPLTRSAST) are compositionally biased toward polar residues. Composition is skewed to basic and acidic residues over residues 319 to 341 (SHPE…DAVE) and 348 to 365 (AEEK…REEE). 7 consecutive C2H2-type zinc fingers follow at residues 386–408 (YACE…KRSH), 414–436 (FECN…LRRH), 442–464 (YICE…IIIH), 470–492 (HLCD…KKTH), 498–520 (FTCD…RVRH), 526–548 (YSCP…VRTH), and 554–576 (YSCE…KRMH).

The protein belongs to the krueppel C2H2-type zinc-finger protein family. Interacts with EP300, KAT5/Tip60 and ZBTB17. The interaction with EP300 is direct and leads to synergistic induction of CDKN1A. On the CDKN1A promoter, forms a complex with ZBTB17; this interaction leads to additive CDKN1A transactivation. The interaction with ZBTB17 may block ZBTB17 repressor activity. In terms of tissue distribution, widely expressed, with highest levels in white adipose tissue and kidney, intermediate levels in brain, liver and heart, and lowest levels in spleen, brown adipose tissue and muscle.

Its subcellular location is the cytoplasm. The protein resides in the nucleus. In terms of biological role, transcription factor. Inhibits cell proliferation by activating either CDKN1A/p21 transcription or RB1 transcription. The chain is Zinc finger and BTB domain-containing protein 49 (Zbtb49) from Mus musculus (Mouse).